We begin with the raw amino-acid sequence, 356 residues long: MIESIIYNVAVMVAGIYLFHRLQYSENKIMVFSKGYVTVLMTIVALLLAAYPIPFHQEYLVHLTFVPLLFLGRFTNMGYTLVSAVIVALVEVFAFGNSLLYGVVLIVIGIIVSMVGPFLKQNDIVALVILNLISVIILLILSIFSPLYDLTEIAFLVPISFVLTIASAITFVDMWHFFSLVTRYENEDKYDYLTGLGNVKEFDRHLNHVSQIAEDKNESLALLLIDIDGFKDVNDTYSHKSGDAVLKQMSQLLKNYVPKQFQIFRNGGEEFSVVIRNYSLDQSVKLAENIRTGVEKSSFHLPNKEVIKLSVSIGVGYLSQDDHKSQRKVFKDADDMVHVAKNEGRNQVMFNPIIKL.

6 consecutive transmembrane segments (helical) span residues 2 to 22 (IESI…FHRL), 35 to 55 (GYVT…PIPF), 76 to 96 (NMGY…FAFG), 99 to 119 (LLYG…GPFL), 124 to 144 (IVAL…LSIF), and 152 to 172 (EIAF…ITFV). The GGDEF domain maps to 218 to 353 (ESLALLLIDI…GRNQVMFNPI (136 aa)).

It localises to the cell membrane. This is an uncharacterized protein from Staphylococcus haemolyticus (strain JCSC1435).